Here is a 103-residue protein sequence, read N- to C-terminus: MANKQKIRIRLKAFDHQVLDQSAEKIVETAKRTGAKVSGPVPLPTEREVITILRAPHKYKDSREQFEMRTHKRLIDILLPTPKTVDALMRLDLPAGVDIEIKL.

The protein belongs to the universal ribosomal protein uS10 family. Part of the 30S ribosomal subunit.

Its function is as follows. Involved in the binding of tRNA to the ribosomes. In Acetivibrio thermocellus (strain ATCC 27405 / DSM 1237 / JCM 9322 / NBRC 103400 / NCIMB 10682 / NRRL B-4536 / VPI 7372) (Clostridium thermocellum), this protein is Small ribosomal subunit protein uS10.